The chain runs to 641 residues: uncharacterized protein (641 aa).

Serine 112 carries the post-translational modification Phosphoserine. Disordered stretches follow at residues 118-243, 261-289, 355-386, and 404-430; these read STSI…LDPT, KSPRPIQSTRVGLRTHSRQASSAGDTVSI, DKSDGDQREEDCVREGISVRSSSPTSPTRLEA, and DGEGLTTESDVSEPPGTSSSAAVQSHS. A compositionally biased stretch (polar residues) spans 132 to 162; sequence ASVSSQYPHRTFQKQVNKTCVSKSDGPSGNG. Serine 198 carries the phosphoserine modification. Polar residues-rich tracts occupy residues 222–234 and 278–289; these read NQELPGSSVSRSN and RQASSAGDTVSI. Residues 355–368 are compositionally biased toward basic and acidic residues; that stretch reads DKSDGDQREEDCVR. Composition is skewed to low complexity over residues 374–383 and 421–430; these read RSSSPTSPTR and SSSAAVQSHS.

This is an uncharacterized protein from Mus musculus (Mouse).